Reading from the N-terminus, the 397-residue chain is MIIKPRVRGFICVTTHPAGCAASVREQIAYVARRGPIERGPKKVLVIGASTGYGLAARIAAAFGAGAATLGVFFERAPADAKPGTAGWYNSAAFHDEAAARGLQATSINGDAFSDEIKHKTIDAIRRDLGQVDLVVYSVAAPRRTHPKTGVTHQSTLKPIGHAVRLRGIDTDNEAIKETLLQPATPDEIADTVAVMGGEDWRMWIDALDAAGVLADGAKTTAFTYLGEQVTHDIYWNGSIGEAKKDLDRTVLALRGKLAARGGDARVSVLKAVVTQASSAIPMMPLYLSLLFKVMKARGTHEGCIEQVDGLLRDSLYGAQPHVDAEGRLRADRLELDPAVQTRVLELWDQVTDDNLYTLTDFAGYKAEFLRLFGFGIDGVDYDAPVEPNVRIPNLIE.

Residues 48-53, 74-75, 111-112, and 139-140 contribute to the NAD(+) site; these read GASTGY, FE, DA, and VA. Tyr-225 serves as a coordination point for substrate. The Proton donor role is filled by Tyr-235. Residues Lys-244 and 273–275 each bind NAD(+); that span reads VVT.

The protein belongs to the TER reductase family. Monomer.

It carries out the reaction a 2,3-saturated acyl-[ACP] + NAD(+) = a (2E)-enoyl-[ACP] + NADH + H(+). It participates in lipid metabolism; fatty acid biosynthesis. Its function is as follows. Involved in the final reduction of the elongation cycle of fatty acid synthesis (FAS II). Catalyzes the reduction of a carbon-carbon double bond in an enoyl moiety that is covalently linked to an acyl carrier protein (ACP). The polypeptide is Enoyl-[acyl-carrier-protein] reductase [NADH] (Burkholderia pseudomallei (strain 668)).